The chain runs to 187 residues: Probable chorismate pyruvate-lyase (187 aa).

Arg-76, Leu-114, and Glu-173 together coordinate substrate.

It belongs to the UbiC family.

The protein resides in the cytoplasm. The catalysed reaction is chorismate = 4-hydroxybenzoate + pyruvate. It participates in cofactor biosynthesis; ubiquinone biosynthesis. Removes the pyruvyl group from chorismate, with concomitant aromatization of the ring, to provide 4-hydroxybenzoate (4HB) for the ubiquinone pathway. The sequence is that of Probable chorismate pyruvate-lyase from Shewanella amazonensis (strain ATCC BAA-1098 / SB2B).